Reading from the N-terminus, the 205-residue chain is Endothelial cell-specific chemotaxis regulator (205 aa).

Residues 1-24 (MGTAGAMQLCWVILGFLLFRGHNS) form the signal peptide. The Extracellular portion of the chain corresponds to 25–124 (QPTMTQTSSS…TSETVLTVAA (100 aa)). Composition is skewed to polar residues over residues 49–71 (SSNPGYIPSSEANRPSHLSSTGT) and 86–101 (SRDTFQTVPPNSTTMS). Residues 49–101 (SSNPGYIPSSEANRPSHLSSTGTPGAGVPSSGRDGGTSRDTFQTVPPNSTTMS) are disordered. The helical transmembrane segment at 125 to 145 (FGVISFIVILVVVVIILVGVV) threads the bilayer. The Cytoplasmic portion of the chain corresponds to 146-205 (SLRFKCRKSKESEDPQKPGSSGLSESCSTANGEKDSITLISMKNINMNNGKQSLSAEKVL). Residues 153–175 (KSKESEDPQKPGSSGLSESCSTA) form a disordered region. Residues 163-175 (PGSSGLSESCSTA) show a composition bias toward polar residues. A Phosphoserine modification is found at Ser198.

The protein belongs to the ECSCR family. As to quaternary structure, interacts with FLNA. Interacts with the 20S proteasome subunit PSMA7. May be heavily O-glycosylated. Highest expression in endothelial cells. Also detected in vascular smooth muscle, macrophages, lymphocytes, and mast cells.

Its subcellular location is the cell membrane. It is found in the cytoplasm. Regulates endothelial chemotaxis and tube formation. Has a role in angiogenesis and apoptosis via modulation of the actin cytoskeleton and facilitation of proteasomal degradation of the apoptosis inhibitors BIRC3/IAP1 and BIRC2/IAP2. The protein is Endothelial cell-specific chemotaxis regulator (ECSCR) of Homo sapiens (Human).